The following is a 199-amino-acid chain: COMM domain-containing protein 2 (199 aa).

In terms of domain architecture, COMM spans 123-190 (SYHNLEWRLD…QALEEMKTNH (68 aa)).

The protein belongs to the COMM domain-containing protein 2 family. In terms of assembly, component of the commander complex consisting of the CCC subcomplex and the retriever subcomplex. Component of the CCC (COMMD/CCDC22/CCDC93) subcomplex consisting of COMMD1, COMMD2, COMMD3, COMMD4, COMMD5, COMMD6, COMMD7, COMMD8, COMMD9, COMMD10, CCDC22 and CCDC93; within the complex forms a heterodimer with COMMD3. Interacts with RELA, RELB, NFKB1/p105, NFKB2/p100. Interacts with CCDC22, CCDC93, SCNN1B, CUL3, CUL4B, CUL5, CUL7. In terms of tissue distribution, ubiquitous.

The protein resides in the cytoplasm. Its function is as follows. Scaffold protein in the commander complex that is essential for endosomal recycling of transmembrane cargos; the commander complex is composed of the CCC subcomplex and the retriever subcomplex. May modulate activity of cullin-RING E3 ubiquitin ligase (CRL) complexes. May down-regulate activation of NF-kappa-B. This chain is COMM domain-containing protein 2 (COMMD2), found in Homo sapiens (Human).